Here is a 175-residue protein sequence, read N- to C-terminus: MDIAIHHPWIRRPFFPFHSPSRLFDQFFGEHLLESDLFSTATSLSPFYLRPPSFLRAPSWIDTGLSEMRLEKDRFSVNLDVKHFSPEELKVKVLGDVIEVHGKHEERQDEHGFISREFHRKYRIPADVDPLTITSSLSSDGVLTVNGPRKQVSGPERTIPITREEKPAVAAAPKK.

Position 1 is an N-acetylmethionine (M1). Residues S19, S45, and S59 each carry the phosphoserine modification. Residues 56–164 (RAPSWIDTGL…PERTIPITRE (109 aa)) enclose the sHSP domain. H83 is a Zn(2+) binding site. Residue K92 is modified to N6-acetyllysine. 4 residues coordinate Zn(2+): H104, E106, H111, and H119. Residues 145–175 (VNGPRKQVSGPERTIPITREEKPAVAAAPKK) are disordered. The residue at position 166 (K166) is an N6-acetyllysine.

Belongs to the small heat shock protein (HSP20) family. In terms of assembly, heteromer composed of three CRYAA and one CRYAB subunits. Aggregates with homologous proteins, including the small heat shock protein HSPB1, to form large heteromeric complexes. Inter-subunit bridging via zinc ions enhances stability, which is crucial as there is no protein turn over in the lens. Interacts with HSPBAP1. Interacts with TTN/titin. Interacts with TMEM109; in the cellular response to DNA damage. Interacts with DES; binds rapidly during early stages of DES filament assembly and a reduced binding seen in the later stages. Interacts with TMED10; the interaction mediates the translocation from the cytoplasm into the ERGIC (endoplasmic reticulum-Golgi intermediate compartment) and thereby secretion. Interacts with ATP6V1A and with MTOR, forming a ternary complex. Abundantly expressed in the lens of the eye. Expressed in ventricular cardiomyocytes of the heart. Also expressed in skeletal muscle and the kidney.

It is found in the cytoplasm. It localises to the cytosol. The protein localises to the nucleus. The protein resides in the secreted. Its subcellular location is the lysosome. In terms of biological role, may contribute to the transparency and refractive index of the lens. Has chaperone-like activity, preventing aggregation of various proteins under a wide range of stress conditions. In lens epithelial cells, stabilizes the ATP6V1A protein, preventing its degradation by the proteasome. The sequence is that of Alpha-crystallin B chain from Mus musculus (Mouse).